We begin with the raw amino-acid sequence, 375 residues long: 4-hydroxy-3-methylbut-2-en-1-yl diphosphate synthase (flavodoxin) (375 aa).

[4Fe-4S] cluster contacts are provided by cysteine 270, cysteine 273, cysteine 305, and glutamate 312.

It belongs to the IspG family. It depends on [4Fe-4S] cluster as a cofactor.

It catalyses the reaction (2E)-4-hydroxy-3-methylbut-2-enyl diphosphate + oxidized [flavodoxin] + H2O + 2 H(+) = 2-C-methyl-D-erythritol 2,4-cyclic diphosphate + reduced [flavodoxin]. The protein operates within isoprenoid biosynthesis; isopentenyl diphosphate biosynthesis via DXP pathway; isopentenyl diphosphate from 1-deoxy-D-xylulose 5-phosphate: step 5/6. Its function is as follows. Converts 2C-methyl-D-erythritol 2,4-cyclodiphosphate (ME-2,4cPP) into 1-hydroxy-2-methyl-2-(E)-butenyl 4-diphosphate. The chain is 4-hydroxy-3-methylbut-2-en-1-yl diphosphate synthase (flavodoxin) from Yersinia pestis (strain Pestoides F).